The chain runs to 1030 residues: uncharacterized protein (1030 aa).

The segment at 51-86 (IKVSFTAKDGELTCKCSCLANVDNCVHIVAVLLKYH) adopts an SWIM-type zinc-finger fold. The region spanning 590-751 (RGLEENKFGG…WSCFDFVLPS (162 aa)) is the Helicase ATP-binding domain. 603–610 (DEMGLGKT) serves as a coordination point for ATP. Positions 702–705 (DEAQ) match the DEAQ box motif. Residues 867–1021 (ALEIIHEAIE…EDVNFFESLT (155 aa)) form the Helicase C-terminal domain.

It belongs to the SNF2/RAD54 helicase family.

This is an uncharacterized protein from Mycoplasma pneumoniae (strain ATCC 29342 / M129 / Subtype 1) (Mycoplasmoides pneumoniae).